We begin with the raw amino-acid sequence, 129 residues long: Large ribosomal subunit protein bL12 (129 aa).

It belongs to the bacterial ribosomal protein bL12 family. Homodimer. Part of the ribosomal stalk of the 50S ribosomal subunit. Forms a multimeric L10(L12)X complex, where L10 forms an elongated spine to which 2 to 4 L12 dimers bind in a sequential fashion. Binds GTP-bound translation factors.

In terms of biological role, forms part of the ribosomal stalk which helps the ribosome interact with GTP-bound translation factors. Is thus essential for accurate translation. This is Large ribosomal subunit protein bL12 from Solidesulfovibrio magneticus (strain ATCC 700980 / DSM 13731 / RS-1) (Desulfovibrio magneticus).